The following is a 732-amino-acid chain: 1,4-alpha-glucan branching enzyme GlgB 2 (732 aa).

Aspartate 413 acts as the Nucleophile in catalysis. Residue glutamate 466 is the Proton donor of the active site.

It belongs to the glycosyl hydrolase 13 family. GlgB subfamily. In terms of assembly, monomer.

It catalyses the reaction Transfers a segment of a (1-&gt;4)-alpha-D-glucan chain to a primary hydroxy group in a similar glucan chain.. Its pathway is glycan biosynthesis; glycogen biosynthesis. Its function is as follows. Catalyzes the formation of the alpha-1,6-glucosidic linkages in glycogen by scission of a 1,4-alpha-linked oligosaccharide from growing alpha-1,4-glucan chains and the subsequent attachment of the oligosaccharide to the alpha-1,6 position. The chain is 1,4-alpha-glucan branching enzyme GlgB 2 from Rhizobium etli (strain ATCC 51251 / DSM 11541 / JCM 21823 / NBRC 15573 / CFN 42).